Here is a 115-residue protein sequence, read N- to C-terminus: Non-specific lipid-transfer protein Cw18 (115 aa).

An N-terminal signal peptide occupies residues 1 to 25 (MARTAATKLALVALVAAMLLVAADA). 4 disulfides stabilise this stretch: Cys29–Cys77, Cys39–Cys54, Cys55–Cys97, and Cys75–Cys111.

Belongs to the plant LTP family. In terms of tissue distribution, highly expressed in leaves and coleoptiles. No expression in roots.

In terms of biological role, plant non-specific lipid-transfer proteins transfer phospholipids as well as galactolipids across membranes. May play a role in wax or cutin deposition in the cell walls of expanding epidermal cells and certain secretory tissues. The polypeptide is Non-specific lipid-transfer protein Cw18 (CW18) (Hordeum vulgare (Barley)).